A 443-amino-acid polypeptide reads, in one-letter code: Serine transporter (443 aa).

11 consecutive transmembrane segments (helical) span residues 38-60, 65-87, 111-131, 150-170, 183-203, 215-235, 265-285, 319-339, 368-388, 390-410, and 422-442; these read TGWV…PVQV, LWVF…RLFI, WGIL…FVYS, GLLS…VAIS, GMVL…VGMW, GLLV…ILFI, IAFG…TLAM, VSVI…YLGF, GIMI…APVL, FTSI…AWLV, and MSLY…FLAF.

The protein belongs to the amino acid/polyamine transporter 2 family. SdaC/TdcC subfamily.

The protein localises to the cell inner membrane. Its function is as follows. Transports both D- and L-serine; allows growth of strain CFT073 cells normally unable to transport D-serine on that substrate. Transport relies on the H(+) gradient and is not competed by L-threonine. May play a role in L-cysteine detoxification. In Escherichia coli O157:H7, this protein is Serine transporter.